The chain runs to 685 residues: Bifunctional diguanylate cyclase/cyclic di-GMP phosphodiesterase MucR (685 aa).

The 194-residue stretch at 6-199 (YNQVLVAFSL…YTGMAAAQFP (194 aa)) folds into the MHYT domain. 7 consecutive transmembrane segments (helical) span residues 9-29 (VLVAFSLIVAILASYTALDMA), 44-64 (LIGGAFAMGFGIWSMHFVGML), 77-97 (GLTLLSLLLAVGSSAFALWLV), 117-137 (GIAAMHYTGMAALLMMPGIVY), 141-161 (WLGLSILIAVIASGAALWIAF), 175-195 (AGAALVMGCAIVGMHYTGMAA), and 214-234 (GWLAVLVIVITLAVIAIALIV). Topologically, residues 235–685 (SVLDSRLEAR…PAEQLLASVA (451 aa)) are cytoplasmic. A GGDEF domain is found at 293–425 (RRFAVLFMDL…GRNGYCFFES (133 aa)). One can recognise an EAL domain in the interval 434 to 685 (QLQLLHDLRQ…PAEQLLASVA (252 aa)). Q455, E469, L472, R473, N528, and Q533 together coordinate 3',3'-c-di-GMP. E469 serves as a coordination point for Mg(2+). N528 lines the Mg(2+) pocket. E560, D590, and D591 together coordinate Mg(2+). D590 serves as a coordination point for 3',3'-c-di-GMP. R614 contacts 3',3'-c-di-GMP. E647 serves as a coordination point for Mg(2+). Positions 650 and 669 each coordinate 3',3'-c-di-GMP.

In terms of assembly, homodimer. It depends on Mg(2+) as a cofactor.

The protein localises to the cell inner membrane. It carries out the reaction 2 GTP = 3',3'-c-di-GMP + 2 diphosphate. The enzyme catalyses 3',3'-c-di-GMP + H2O = 5'-phosphoguanylyl(3'-&gt;5')guanosine + H(+). Its function is as follows. Displays both diguanylate cyclase (DGC) and c-di-GMP-specific phosphodiesterase (PDE) activity. Probably modulates DGC and PDE activities, and thus c-di-GMP levels, in a growth mode-dependent manner. May act as a PDE under planktonic growth conditions and as a DGC in biofilms. During biofilm formation, it specifically activates alginate biosynthesis via generation of a localized c-di-GMP pool in the vicinity of the alginate biosynthesis protein Alg44. The protein is Bifunctional diguanylate cyclase/cyclic di-GMP phosphodiesterase MucR of Pseudomonas aeruginosa (strain ATCC 15692 / DSM 22644 / CIP 104116 / JCM 14847 / LMG 12228 / 1C / PRS 101 / PAO1).